Here is a 64-residue protein sequence, read N- to C-terminus: Large ribosomal subunit protein bL35 (64 aa).

A disordered region spans residues 1–64; that stretch reads MPKNKTNSGA…RKSIKKLLGK (64 aa).

The protein belongs to the bacterial ribosomal protein bL35 family.

In Beutenbergia cavernae (strain ATCC BAA-8 / DSM 12333 / CCUG 43141 / JCM 11478 / NBRC 16432 / NCIMB 13614 / HKI 0122), this protein is Large ribosomal subunit protein bL35.